A 401-amino-acid chain; its full sequence is Putative F-box/FBD/LRR-repeat protein At3g23955 (401 aa).

The F-box domain maps to 56-102 (VPARFQLPDPLLTQILNHLPTEEAVKTSVLSTRWRTLWLWVHNLELS). 2 LRR repeats span residues 128-152 (IESL…AFVK) and 275-296 (MSSL…FLRS). Residues 321 to 373 (IKRVSISSVPECLLSSLEFVEFKAPICGLAPEMMLVWYFLENSPTLKKLTLRL) form the FBD domain.

This chain is Putative F-box/FBD/LRR-repeat protein At3g23955, found in Arabidopsis thaliana (Mouse-ear cress).